The sequence spans 828 residues: Periplasmic nitrate reductase (828 aa).

Positions 1–31 (MKLSRRSFMKANAVAAAAAAAGLSVPGVARA) form a signal peptide, tat-type signal. A 4Fe-4S Mo/W bis-MGD-type domain is found at 39-95 (IKWDKAPCRFCGTGCGVLVGTQQGRVVACQGDPDAPVNRGLNCIKGYFLPKIMYGKD). [4Fe-4S] cluster is bound by residues Cys-46, Cys-49, Cys-53, and Cys-81. Mo-bis(molybdopterin guanine dinucleotide) is bound by residues Lys-83, Gln-150, Asn-175, Cys-179, 212 to 219 (WGANMAEM), 243 to 247 (STYQH), 262 to 264 (QSD), Met-372, Gln-376, Asn-482, 508 to 509 (SD), Lys-531, Asp-558, and 718 to 727 (TGRVLEHWHT). Phe-794 serves as a coordination point for substrate. Mo-bis(molybdopterin guanine dinucleotide) contacts are provided by Asn-802 and Lys-819.

This sequence belongs to the prokaryotic molybdopterin-containing oxidoreductase family. NasA/NapA/NarB subfamily. As to quaternary structure, component of the periplasmic nitrate reductase NapAB complex composed of NapA and NapB. [4Fe-4S] cluster serves as cofactor. It depends on Mo-bis(molybdopterin guanine dinucleotide) as a cofactor. In terms of processing, predicted to be exported by the Tat system. The position of the signal peptide cleavage has not been experimentally proven.

The protein resides in the periplasm. The catalysed reaction is 2 Fe(II)-[cytochrome] + nitrate + 2 H(+) = 2 Fe(III)-[cytochrome] + nitrite + H2O. Catalytic subunit of the periplasmic nitrate reductase complex NapAB. Receives electrons from NapB and catalyzes the reduction of nitrate to nitrite. In Shigella flexneri serotype 5b (strain 8401), this protein is Periplasmic nitrate reductase.